The following is a 204-amino-acid chain: Protein GrpE (204 aa).

Positions 1 to 12 (MSNEEQAQKDDA) are enriched in basic and acidic residues. A disordered region spans residues 1 to 32 (MSNEEQAQKDDAQPVNEAAIDATAEQADAEVE). A compositionally biased stretch (low complexity) spans 17–26 (EAAIDATAEQ).

Belongs to the GrpE family. Homodimer.

It localises to the cytoplasm. Its function is as follows. Participates actively in the response to hyperosmotic and heat shock by preventing the aggregation of stress-denatured proteins, in association with DnaK and GrpE. It is the nucleotide exchange factor for DnaK and may function as a thermosensor. Unfolded proteins bind initially to DnaJ; upon interaction with the DnaJ-bound protein, DnaK hydrolyzes its bound ATP, resulting in the formation of a stable complex. GrpE releases ADP from DnaK; ATP binding to DnaK triggers the release of the substrate protein, thus completing the reaction cycle. Several rounds of ATP-dependent interactions between DnaJ, DnaK and GrpE are required for fully efficient folding. The protein is Protein GrpE of Pseudoalteromonas atlantica (strain T6c / ATCC BAA-1087).